Here is a 1463-residue protein sequence, read N- to C-terminus: Secretory phospholipase A2 receptor (1463 aa).

The first 20 residues, 1 to 20, serve as a signal peptide directing secretion; it reads MLLSPSLLLLLLLGAPRGCA. Residues 21 to 1397 lie on the Extracellular side of the membrane; that stretch reads EGVAAALTPE…ALPEKGPSHS (1377 aa). The Ricin B-type lectin domain occupies 38–161; it reads KGIFVIQSES…GSGGGDICEY (124 aa). 14 disulfide bridges follow: Cys51-Cys64, Cys89-Cys106, Cys178-Cys204, Cys192-Cys219, Cys260-Cys354, Cys330-Cys346, Cys406-Cys501, Cys478-Cys493, Cys617-Cys634, Cys699-Cys796, Cys774-Cys788, Cys840-Cys937, Cys914-Cys929, and Cys1067-Cys1087. Asn93 carries an N-linked (GlcNAc...) asparagine glycan. Residues 173–221 enclose the Fibronectin type-II domain; that stretch reads THGMPCMFPFQYNHQWHHECTREGREDDLLWCATTSRYERDEKWGFCPD. 8 consecutive C-type lectin domains span residues 238 to 355, 385 to 502, 522 to 643, 673 to 797, 819 to 938, 965 to 1096, 1121 to 1232, and 1257 to 1378; these read NSHI…YICK, YNRN…YICK, HGGF…MSLC, GLAS…WICK, YQDA…SICK, FNYK…GFVC, YGNR…GAIC, and FKSN…FICK. A glycan (N-linked (GlcNAc...) asparagine) is linked at Asn454. N-linked (GlcNAc...) asparagine glycosylation is present at Asn1123. 3 disulfides stabilise this stretch: Cys1209/Cys1223, Cys1280/Cys1377, and Cys1354/Cys1369. A helical transmembrane segment spans residues 1398–1418; it reads IIPLAVVLTLIVIVAICTLSF. Residues 1419–1463 lie on the Cytoplasmic side of the membrane; sequence CIYKHNGGFFRRLAGFRNPYYPATNFSTVYLEENILISDLEKSDQ. Positions 1436–1442 match the Endocytosis signal motif; sequence NPYYPAT.

In terms of assembly, interacts with sPLA2-IB/PLA2G1B; this interaction mediates intracellular signaling as well as clearance of extracellular sPLA2-IB/PLA2G1B via endocytotic pathway. Interacts with sPLA2-X/PLA2G10; this interaction mediates sPLA2-X/PLA2G10 clearance and inactivation. Post-translationally, the secretory phospholipase A2 receptor form may be produced by the action of metalloproteinases. It contains all extracellular domains and only lacks transmembrane and cytosolic regions. It is however unclear whether this form is produced by proteolytic cleavage as suggested by some experiments, or by alternative splicing, as in the case of isoform 2 that shares all characteristics of secretory phospholipase A2 receptor form. Expressed in podocytes (at protein level). Present in lung macrophage (at protein level). Highly expressed in kidney. Also expressed in pancreas, amnion, choriodecidua and placenta. Isoform 2 is expressed at much lower level.

The protein resides in the cell membrane. The protein localises to the secreted. Functionally, receptor for secretory phospholipase A2 (sPLA2). Acts as a receptor for phospholipase sPLA2-IB/PLA2G1B but not sPLA2-IIA/PLA2G2A. Also able to bind to snake PA2-like toxins. Although its precise function remains unclear, binding of sPLA2 to its receptor participates in both positive and negative regulation of sPLA2 functions as well as clearance of sPLA2. Binding of sPLA2-IB/PLA2G1B induces various effects depending on the cell type, such as activation of the mitogen-activated protein kinase (MAPK) cascade to induce cell proliferation, the production of lipid mediators, selective release of arachidonic acid in bone marrow-derived mast cells. In neutrophils, binding of sPLA2-IB/PLA2G1B can activate p38 MAPK to stimulate elastase release and cell adhesion. May be involved in responses in pro-inflammatory cytokine productions during endotoxic shock. Also has endocytic properties and rapidly internalizes sPLA2 ligands, which is particularly important for the clearance of extracellular sPLA2s to protect their potent enzymatic activities. The soluble secretory phospholipase A2 receptor form is circulating and acts as a negative regulator of sPLA2 functions by blocking the biological functions of sPLA2-IB/PLA2G1B. In podocytes, binding of sPLA2-IB/PLA2G1B can regulate podocyte survival and glomerular homeostasis. The sequence is that of Secretory phospholipase A2 receptor (PLA2R1) from Homo sapiens (Human).